A 307-amino-acid chain; its full sequence is tRNA N6-adenosine threonylcarbamoyltransferase (307 aa).

Fe cation-binding residues include histidine 108 and histidine 112. Residues 131-135, aspartate 164, glycine 177, aspartate 181, and asparagine 266 each bind substrate; that span reads IVSGG. Position 290 (aspartate 290) interacts with Fe cation.

Belongs to the KAE1 / TsaD family. The cofactor is Fe(2+).

Its subcellular location is the cytoplasm. The catalysed reaction is L-threonylcarbamoyladenylate + adenosine(37) in tRNA = N(6)-L-threonylcarbamoyladenosine(37) in tRNA + AMP + H(+). Its function is as follows. Required for the formation of a threonylcarbamoyl group on adenosine at position 37 (t(6)A37) in tRNAs that read codons beginning with adenine. Is involved in the transfer of the threonylcarbamoyl moiety of threonylcarbamoyl-AMP (TC-AMP) to the N6 group of A37, together with TsaE and TsaB. TsaD likely plays a direct catalytic role in this reaction. This chain is tRNA N6-adenosine threonylcarbamoyltransferase, found in Mycoplasmopsis synoviae (strain 53) (Mycoplasma synoviae).